The chain runs to 409 residues: Accessory Sec system protein translocase subunit SecY2 (409 aa).

A run of 10 helical transmembrane segments spans residues 16–36 (ILIT…PIPG), 61–81 (LSQV…MILL), 104–124 (VVML…FQYH), 132–152 (LLLA…IGNL), 161–181 (MTIL…PLIF), 190–210 (LAII…ITFE), 242–262 (GMAF…IILL), 286–306 (GVVI…FVNI), 341–361 (LFGT…LLFA), and 374–394 (TGIF…FQVI).

It belongs to the SecY/SEC61-alpha family. SecY2 subfamily. Component of the accessory SecA2/SecY2 protein translocase complex required to export cell wall proteins. May form heterotrimers with SecE and SecG subunits.

The protein resides in the cell membrane. Part of the accessory SecA2/SecY2 system specifically required for export of possible cell wall proteins. The central subunit of a protein translocation channel. This chain is Accessory Sec system protein translocase subunit SecY2, found in Streptococcus agalactiae serotype Ia (strain ATCC 27591 / A909 / CDC SS700).